The chain runs to 260 residues: Vaa serine proteinase homolog 1 (260 aa).

The first 18 residues, 1–18 (MVLIRVLANLLVLQLSYA), serve as a signal peptide directing secretion. The propeptide occupies 19–24 (QKSSEL). In terms of domain architecture, Peptidase S1 spans 25–251 (VIGGDECNIN…YTDWIQSIIA (227 aa)). 6 disulfides stabilise this stretch: Cys-31–Cys-165, Cys-52–Cys-68, Cys-100–Cys-258, Cys-144–Cys-212, Cys-176–Cys-191, and Cys-202–Cys-227. Residue Asn-123 is glycosylated (N-linked (GlcNAc...) asparagine). Residues 172–186 (DYSVCQKVYRKLPEK) are key residues for binding to FVIIIa. Asn-253 is a glycosylation site (N-linked (GlcNAc...) asparagine).

Belongs to the peptidase S1 family. Snake venom subfamily. Post-translationally, N-glycosylated. The toxin exists in multiple glycoforms. Expressed by the venom gland.

It is found in the secreted. In terms of biological role, this is the first member of the serine protease family that has strong anticoagulant activity and lacks enzymatic activity. It inhibits activities of three blood coagulation complexes: (1) prothrombinase complex (composed of blood coagulation factors Va and Xa (F5 and F10)) (IC(50)=164.1 nM), (2) intrinsic tenase complex (composed of factors VIIIa and IXa (F8 and F9)), and (3) extrinsic tenase complex (composed of tissue factor and factor VIIa (F7)). The toxin also has been observed to bind prothrombin, factor FVa, non-activated and activated forms of factors FVII (F7) (FVII and FVIIa), factor FVIIIa (F8), factors FIX and FIXa (F9) and factors FX and FXa (F10). The toxin inhibits the activity of the intrinsic tenase complex mainly by competing with FIXa (F9) for binding to FVIIIa (F8). The sequence is that of Vaa serine proteinase homolog 1 from Vipera ammodytes ammodytes (Western sand viper).